We begin with the raw amino-acid sequence, 128 residues long: Large ribosomal subunit protein bL20c (128 aa).

This sequence belongs to the bacterial ribosomal protein bL20 family.

Its subcellular location is the plastid. The protein localises to the chloroplast. Functionally, binds directly to 23S ribosomal RNA and is necessary for the in vitro assembly process of the 50S ribosomal subunit. It is not involved in the protein synthesizing functions of that subunit. The sequence is that of Large ribosomal subunit protein bL20c from Gossypium barbadense (Sea Island cotton).